The following is a 126-amino-acid chain: RuBisCO chaperone RbcX (126 aa).

Belongs to the RbcX family. Homodimer. Interacts with the exposed C-terminal peptide of RbcL via its central cleft, contacts a second RbcL monomer via its peripheral polar surface.

It is found in the carboxysome. It localises to the cytoplasm. Its function is as follows. An RbcL-specific chaperone. Required for assembly of the RbcL8 core. The central cleft of the RbcX homodimer (RbcX2) binds the C-terminus of a RbcL monomer, stabilizing the C-terminus and probably preventing its reassociation with chaperonin GroEL-ES. At the same time the peripheral region of RbcX2 binds a second RbcL monomer, bridging the RbcL homodimers in the correct orientation. The RbcX2(2)-bound RbcL dimers then assemble into the RbcL8 core (RbcL8-(RbcX2)8). RbcS binding triggers the release of RbcX2. This chain is RuBisCO chaperone RbcX, found in Thermosynechococcus vestitus (strain NIES-2133 / IAM M-273 / BP-1).